A 392-amino-acid polypeptide reads, in one-letter code: uncharacterized protein (392 aa).

A signal peptide spans 1 to 23; sequence MWTALVLVWISSVLLPRSHMMSA. The Extracellular segment spans residues 24–342; that stretch reads EPRNIVTNKW…DALTPSLVNK (319 aa). A glycan (N-linked (GlcNAc...) asparagine) is linked at asparagine 77. Disordered stretches follow at residues 83-154 and 167-320; these read AEVT…PRTA and AAGT…TDSC. The span at 86–97 shows a compositional bias: low complexity; it reads TTHGTNTSTPTT. Polar residues-rich tracts occupy residues 107–127 and 170–249; these read SRTL…TRPT and TVNT…SAST. N-linked (GlcNAc...) asparagine glycosylation occurs at asparagine 172. 2 stretches are compositionally biased toward low complexity: residues 265-277 and 284-309; these read SPTT…LPTQ and TLLT…SRSS. A helical transmembrane segment spans residues 343-363; sequence MLLLVVLLVGVTLFIAVLVMF. The Cytoplasmic segment spans residues 364-392; sequence ALQAYESYKKKDYTQVDYLINGMYADSEM.

It is found in the cell membrane. Its subcellular location is the golgi apparatus. The protein localises to the trans-Golgi network membrane. This is an uncharacterized protein from Mus musculus (Mouse).